The following is a 167-amino-acid chain: Envelope glycoprotein L (167 aa).

A signal peptide spans 1 to 20; sequence MGIFALFAVLWTTLLVTSHA. The tract at residues 18 to 131 is interaction with gH; it reads SHAYVALPCC…ADSSIHNVNI (114 aa). The span at 142-154 shows a compositional bias: polar residues; the sequence is RTGSVSGSQTRAK. Residues 142 to 167 form a disordered region; the sequence is RTGSVSGSQTRAKSSSRRAHAGQKGK. The segment covering 155 to 167 has biased composition (basic residues); it reads SSSRRAHAGQKGK.

This sequence belongs to the herpesviridae glycoprotein L family. In terms of assembly, interacts with glycoprotein H (gH); this interaction is necessary for the correct processing and cell surface expression of gH. The heterodimer gH/gL seems to interact with gB trimers during fusion. When in complex with gH, interacts with host EPHA2; this interaction triggers EPHA2 phosphorylation and endocytosis, allowing virus entry.

It localises to the virion membrane. The protein localises to the host cell membrane. The protein resides in the host Golgi apparatus. Its subcellular location is the host trans-Golgi network. Its function is as follows. The heterodimer glycoprotein H-glycoprotein L is required for the fusion of viral and plasma membranes leading to virus entry into the host cell. Acts as a functional inhibitor of gH and maintains gH in an inhibited form. Upon binding to host integrins, gL dissociates from gH leading to activation of the viral fusion glycoproteins gB and gH. Targets heparan sulfate proteoglycans of the syndecan family as well as host EPHA2 to promote viral entry. This is Envelope glycoprotein L from Human herpesvirus 8 type P (isolate GK18) (HHV-8).